A 286-amino-acid polypeptide reads, in one-letter code: MKIAVIGLGNMGQPIARNVLQAGYELTVYNRTKQKTEDLVTEGAQAADTPRLAAKSADIVITMLADDDSVSTVTFGEDGLLEGLAENGIHISMSTISVEFSEKLAAAHAEKGQFFLAAPVLGRPDAAAKAALRIITAGPAEAKQAAKPLLDSLSQQIFDVGEESKTANAAKISINFLLVSMLEALSESFLMMEKYGLEQKQFLEIASALFGSPVYQNYGTIMAEQKFEPAGFKMSLGLKDTNLALAAAKRVSANLPLAELAKSHFESGIEKGFGDLDWAALIKCIK.

Residues 4-18 (AVIG…IARN) and Thr95 each bind NAD(+). The active site involves Lys171. Lys239 provides a ligand contact to NAD(+).

This sequence belongs to the HIBADH-related family.

This is an uncharacterized protein from Bacillus subtilis (strain 168).